A 648-amino-acid chain; its full sequence is p-hydroxybenzoic acid efflux pump subunit AaeB (648 aa).

The next 11 membrane-spanning stretches (helical) occupy residues 11-31, 41-61, 65-87, 91-110, 125-145, 150-170, 369-389, 406-426, 430-450, 455-474, and 481-501; these read FACKLTLAIVLSLLLGFYFGL, AALVAAGPAFAAGGEPFAGAI, GWLRIIGTVLGSLCALLLMMLLI, LLMILLCCLWAGVCTWLSSL, TALIIVVSCLGEPQFILQLAL, EIVLGIACAVLADTLLAPRSV, LFWLWSGWNAGSGCMIMIAVV, FLMGSLVALPVGALYYTVILP, QSLVLLCLSLGALTFICGMEV, LGSLGTLASTLNILVLSNPM, and FVDSAIGQVIGCLLALVVLLA.

This sequence belongs to the aromatic acid exporter ArAE (TC 2.A.85) family.

The protein resides in the cell inner membrane. Its function is as follows. Forms an efflux pump with AaeA. Could function as a metabolic relief valve, allowing to eliminate certain compounds when they accumulate to high levels in the cell. The chain is p-hydroxybenzoic acid efflux pump subunit AaeB (aaeB) from Edwardsiella tarda (strain FL6-60).